Reading from the N-terminus, the 193-residue chain is Adenine phosphoribosyltransferase (193 aa).

This sequence belongs to the purine/pyrimidine phosphoribosyltransferase family. In terms of assembly, homodimer.

It localises to the cytoplasm. The enzyme catalyses AMP + diphosphate = 5-phospho-alpha-D-ribose 1-diphosphate + adenine. Its pathway is purine metabolism; AMP biosynthesis via salvage pathway; AMP from adenine: step 1/1. In terms of biological role, catalyzes a salvage reaction resulting in the formation of AMP, that is energically less costly than de novo synthesis. This Bifidobacterium longum (strain DJO10A) protein is Adenine phosphoribosyltransferase.